A 129-amino-acid chain; its full sequence is MPSQPNRELETFANPLPERDYTIRIRIPEFTCLCPKTGQPDFATLQLEYVPDQACVELKSLKLYIWSYRDQGAFHEAVTNQILDDLTAVCKPRFMRLTAEFNVRGGIYTTVAAEYRQPGWDAPKIVRLP.

The active-site Thioimide intermediate is C34. D41 (proton donor) is an active-site residue. Residues 56-58 and 75-76 contribute to the substrate site; these read VEL and HE.

Belongs to the GTP cyclohydrolase I family. QueF type 1 subfamily.

The protein resides in the cytoplasm. It carries out the reaction 7-aminomethyl-7-carbaguanine + 2 NADP(+) = 7-cyano-7-deazaguanine + 2 NADPH + 3 H(+). The protein operates within tRNA modification; tRNA-queuosine biosynthesis. Functionally, catalyzes the NADPH-dependent reduction of 7-cyano-7-deazaguanine (preQ0) to 7-aminomethyl-7-deazaguanine (preQ1). The polypeptide is NADPH-dependent 7-cyano-7-deazaguanine reductase (Nitrosococcus oceani (strain ATCC 19707 / BCRC 17464 / JCM 30415 / NCIMB 11848 / C-107)).